The primary structure comprises 624 residues: uncharacterized protein (624 aa).

The disordered stretch occupies residues 108–138 (PTAWSGMESDSTASERSLPQRTDTTSVSSQY). A Phosphoserine modification is found at Ser-112. Residues 115 to 138 (ESDSTASERSLPQRTDTTSVSSQY) are compositionally biased toward polar residues. Ser-205 is modified (phosphoserine). 2 disordered regions span residues 217 to 236 (LMESSGEKERNGNQELPGTR) and 305 to 329 (KRECIKLASSPSRMETESSEEPVSE).

This is an uncharacterized protein from Rattus norvegicus (Rat).